Reading from the N-terminus, the 400-residue chain is Subtilisin-like protease 7 (400 aa).

A signal peptide spans 1 to 20; it reads MGFITKAIPLALAAASVING. A propeptide spanning residues 21–119 is cleaved from the precursor; it reads AEILETRAGV…IERDARVQIN (99 aa). The 83-residue stretch at 36–118 folds into the Inhibitor I9 domain; the sequence is KYIVVMNDGI…YIERDARVQI (83 aa). A Peptidase S8 domain is found at 129-400; sequence SWGLARVGSK…SKLINNGSGM (272 aa). Catalysis depends on charge relay system residues Asp-161 and His-192. Asn-222 and Asn-252 each carry an N-linked (GlcNAc...) asparagine glycan. The Charge relay system role is filled by Ser-346. N-linked (GlcNAc...) asparagine glycosylation occurs at Asn-396.

This sequence belongs to the peptidase S8 family.

Its subcellular location is the secreted. In terms of biological role, secreted subtilisin-like serine protease with keratinolytic activity that contributes to pathogenicity. The sequence is that of Subtilisin-like protease 7 (SUB7) from Trichophyton soudanense.